The chain runs to 571 residues: Urease subunit alpha (571 aa).

One can recognise a Urease domain in the interval 133 to 571 (GGIDTHIHFV…LPLAQRYFLF (439 aa)). The Ni(2+) site is built by histidine 138, histidine 140, and lysine 221. Lysine 221 is subject to N6-carboxylysine. Histidine 223 is a substrate binding site. Ni(2+) contacts are provided by histidine 250 and histidine 276. Histidine 324 (proton donor) is an active-site residue. Aspartate 364 is a binding site for Ni(2+).

It belongs to the metallo-dependent hydrolases superfamily. Urease alpha subunit family. In terms of assembly, heterotrimer of UreA (gamma), UreB (beta) and UreC (alpha) subunits. Three heterotrimers associate to form the active enzyme. The cofactor is Ni cation. Carboxylation allows a single lysine to coordinate two nickel ions.

It localises to the cytoplasm. It carries out the reaction urea + 2 H2O + H(+) = hydrogencarbonate + 2 NH4(+). The protein operates within nitrogen metabolism; urea degradation; CO(2) and NH(3) from urea (urease route): step 1/1. The polypeptide is Urease subunit alpha (Anaeromyxobacter sp. (strain K)).